A 546-amino-acid chain; its full sequence is Probable sucrose-6-phosphate hydrolase (546 aa).

Substrate-binding positions include 105-108 (LLND), Gln124, 167-168 (FS), 228-229 (RD), and Glu283. Residue Asp108 is part of the active site.

The protein belongs to the glycosyl hydrolase 32 family.

It is found in the cytoplasm. It carries out the reaction Hydrolysis of terminal non-reducing beta-D-fructofuranoside residues in beta-D-fructofuranosides.. It functions in the pathway glycan biosynthesis; sucrose metabolism. Enables the bacterium to metabolize sucrose as a sole carbon source. The chain is Probable sucrose-6-phosphate hydrolase from Vibrio cholerae.